A 548-amino-acid chain; its full sequence is Ran-binding protein 9 (548 aa).

Residues 1–23 (MSSPPLHGLSSVGHLSRDPPPRS) form a disordered region. The B30.2/SPRY domain maps to 2–189 (SSPPLHGLSS…VDANFGQSPF (188 aa)). One can recognise a LisH domain in the interval 217–249 (WQSMIQRMVSSYLVHHGYCSTAEAFAKSTDQTV). Positions 255–312 (SIKNRQRIQKLVLSGRMGEAIETTQQLYPSLLERNPNLLFTLKVRQFIEMVNGTDSEV) constitute a CTLH domain.

It belongs to the RANBP9/10 family. In terms of assembly, identified in the CTLH complex that contains at least MAEA, RMND5A (or alternatively its paralog RMND5B), GID8, WDR26, and RANBP9 and/or RANBP10.

It is found in the cytoplasm. The protein resides in the cell membrane. It localises to the nucleus. Functionally, may act as scaffolding protein, and as adapter protein to couple membrane receptors to intracellular signaling pathways. Acts as a mediator of cell spreading and actin cytoskeleton rearrangement. Core component of the CTLH E3 ubiquitin-protein ligase complex that mediates ubiquitination and subsequent proteasomal degradation of target proteins. The chain is Ran-binding protein 9 (ranbp9) from Xenopus laevis (African clawed frog).